The chain runs to 104 residues: L-rhamnose mutarotase (104 aa).

Substrate is bound at residue tyrosine 18. The active-site Proton donor is the histidine 22. Substrate contacts are provided by residues tyrosine 41 and 76–77 (WW).

It belongs to the rhamnose mutarotase family. As to quaternary structure, homodimer.

The protein resides in the cytoplasm. It carries out the reaction alpha-L-rhamnose = beta-L-rhamnose. It participates in carbohydrate metabolism; L-rhamnose metabolism. Functionally, involved in the anomeric conversion of L-rhamnose. This chain is L-rhamnose mutarotase, found in Escherichia coli (strain K12 / MC4100 / BW2952).